A 1828-amino-acid chain; its full sequence is Unconventional myosin-Va (1828 aa).

At Ala-2 the chain carries N-acetylalanine. Residues 8 to 60 (TKFARVWIPDPEEVWKSAELLKDYKPGDKVLLLHLEEGKDLEYRLDPKTSELP) enclose the Myosin N-terminal SH3-like domain. Positions 69-763 (VGENDLTALS…QVAYLEKLRA (695 aa)) constitute a Myosin motor domain. Residue 163-170 (GESGAGKT) participates in ATP binding. The segment at 599 to 633 (ISPTSATSSGRTPLTRVPVKPTKGRPGQTAKEHKK) is disordered. Phosphoserine is present on Ser-600. The span at 600–610 (SPTSATSSGRT) shows a compositional bias: polar residues. An actin-binding region spans residues 643–665 (LHLLMETLNATTPHYVRCIKPND). 6 IQ domains span residues 766–788 (LRAA…RYLC), 789–813 (MQRA…KFLR), 814–836 (RTKA…KYKI), 837–861 (RRAA…RKIL), 862–884 (REHK…HYKR), and 885–914 (TMKA…EARS). Coiled coils occupy residues 914-1239 (SVER…EVNA) and 1314-1418 (GLKE…ELEV). The residue at position 1032 (Thr-1032) is a Phosphothreonine. The disordered stretch occupies residues 1105-1147 (VPKPGHKRTDSTHSSNESEYTFSSEFAETEDIAPRTEEPTEKK). Residues 1116-1130 (THSSNESEYTFSSEF) are compositionally biased toward polar residues. Over residues 1136–1147 (IAPRTEEPTEKK) the composition is skewed to basic and acidic residues. Phosphoserine is present on residues Ser-1425 and Ser-1625. Residues 1507–1783 (TSTINSIKKV…IRTIQVRLRD (277 aa)) form the Dilute domain. Residue Thr-1733 is modified to Phosphothreonine.

This sequence belongs to the TRAFAC class myosin-kinesin ATPase superfamily. Myosin family. As to quaternary structure, may be a homodimer, which associates with multiple calmodulin or myosin light chains. Interacts with RIPL2, the interaction is required for its role in dendrite formation. Interacts with MLPH. Interacts with SYTL4. Interacts with MYRIP. Interacts with RAB10; mediates the transport to the plasma membrane of SLC2A4/GLUT4 storage vesicles. Interacts with FMR1; this interaction occurs in association with polyribosome.

It catalyses the reaction ATP + H2O = ADP + phosphate + H(+). In terms of biological role, processive actin-based motor that can move in large steps approximating the 36-nm pseudo-repeat of the actin filament. Can hydrolyze ATP in the presence of actin, which is essential for its function as a motor protein. Involved in melanosome transport. Also mediates the transport of vesicles to the plasma membrane. May also be required for some polarization process involved in dendrite formation. In Rattus norvegicus (Rat), this protein is Unconventional myosin-Va (Myo5a).